A 610-amino-acid polypeptide reads, in one-letter code: UvrABC system protein C (610 aa).

The 79-residue stretch at 16–94 (SQPGVYRMYD…IKLYQPRYNV (79 aa)) folds into the GIY-YIG domain. A UVR domain is found at 204-239 (QQVLTQLITRMEEASQQLHFEDAARIRDQIQAVRRV).

It belongs to the UvrC family. In terms of assembly, interacts with UvrB in an incision complex.

It localises to the cytoplasm. Its function is as follows. The UvrABC repair system catalyzes the recognition and processing of DNA lesions. UvrC both incises the 5' and 3' sides of the lesion. The N-terminal half is responsible for the 3' incision and the C-terminal half is responsible for the 5' incision. The protein is UvrABC system protein C of Yersinia pseudotuberculosis serotype I (strain IP32953).